The sequence spans 418 residues: MEEIGILVEKAQDEIPALSVSRPQTGLSFLGPEPEDLEDLYSRYKKLQQELEFLEVQEEYIKDEQKNLKKEFLHAQEEVKRIQSIPLVIGQFLEAVDQNTAIVGSTTGSNYYVRILSTIDRELLKPNASVALHKHSNALVDVLPPEADSSIMMLTSDQKPDVMYADIGGMDIQKQEVREAVELPLTHFELYKQIGIDPPRGVLMYGPPGCGKTMLAKAVAHHTTAAFIRVVGSEFVQKYLGEGPRMVRDVFRLAKENAPAIIFIDEIDAIATKRFDAQTGADREVQRILLELLNQMDGFDQNVNVKVIMATNRADTLDPALLRPGRLDRKIEFPLPDRRQKRLIFSTITSKMNLSEEVDLEDYVARPDKISGADINSICQESGMLAVRENRYIVLAKDFEKAYKTVIKKDEQEHEFYK.

At Met1 the chain carries N-acetylmethionine. Ser21 carries the post-translational modification Phosphoserine. Thr25 carries the phosphothreonine modification. The residue at position 28 (Ser28) is a Phosphoserine. Gly206 to Thr213 lines the ATP pocket. 2 positions are modified to N6-acetyllysine: Lys397 and Lys401.

The protein belongs to the AAA ATPase family. As to quaternary structure, component of the 19S proteasome regulatory particle complex. The 26S proteasome consists of a 20S core particle (CP) and two 19S regulatory subunits (RP). The regulatory particle is made of a lid composed of 9 subunits, a base containing 6 ATPases including PSMC4 and few additional components. Interacts with NR1I3. Interacts with PAAF1. Interacts with TRIM5. Interacts with ZFAND1.

It is found in the cytoplasm. The protein localises to the nucleus. Functionally, component of the 26S proteasome, a multiprotein complex involved in the ATP-dependent degradation of ubiquitinated proteins. This complex plays a key role in the maintenance of protein homeostasis by removing misfolded or damaged proteins, which could impair cellular functions, and by removing proteins whose functions are no longer required. Therefore, the proteasome participates in numerous cellular processes, including cell cycle progression, apoptosis, or DNA damage repair. PSMC4 belongs to the heterohexameric ring of AAA (ATPases associated with diverse cellular activities) proteins that unfolds ubiquitinated target proteins that are concurrently translocated into a proteolytic chamber and degraded into peptides. The chain is 26S proteasome regulatory subunit 6B (PSMC4) from Bos taurus (Bovine).